The following is a 793-amino-acid chain: Probable phosphoketolase (793 aa).

Belongs to the XFP family. Thiamine diphosphate is required as a cofactor.

This chain is Probable phosphoketolase, found in Streptomyces avermitilis (strain ATCC 31267 / DSM 46492 / JCM 5070 / NBRC 14893 / NCIMB 12804 / NRRL 8165 / MA-4680).